The following is a 302-amino-acid chain: Ribosomal RNA small subunit methyltransferase A (302 aa).

Residues histidine 15, leucine 17, glycine 42, glutamate 64, aspartate 89, and asparagine 109 each contribute to the S-adenosyl-L-methionine site. Positions 275–302 (DAASADGHDHGDGSGQGESSPGGARDQI) are disordered.

The protein belongs to the class I-like SAM-binding methyltransferase superfamily. rRNA adenine N(6)-methyltransferase family. RsmA subfamily.

Its subcellular location is the cytoplasm. It carries out the reaction adenosine(1518)/adenosine(1519) in 16S rRNA + 4 S-adenosyl-L-methionine = N(6)-dimethyladenosine(1518)/N(6)-dimethyladenosine(1519) in 16S rRNA + 4 S-adenosyl-L-homocysteine + 4 H(+). Its function is as follows. Specifically dimethylates two adjacent adenosines (A1518 and A1519) in the loop of a conserved hairpin near the 3'-end of 16S rRNA in the 30S particle. May play a critical role in biogenesis of 30S subunits. This Parasynechococcus marenigrum (strain WH8102) protein is Ribosomal RNA small subunit methyltransferase A.